Reading from the N-terminus, the 509-residue chain is Maturase K (509 aa).

This sequence belongs to the intron maturase 2 family. MatK subfamily.

It localises to the plastid. It is found in the chloroplast. Functionally, usually encoded in the trnK tRNA gene intron. Probably assists in splicing its own and other chloroplast group II introns. This is Maturase K from Nicotiana acuminata (Acuminate tobacco).